A 364-amino-acid polypeptide reads, in one-letter code: Selenide, water dikinase (364 aa).

Residue Sec-25 is part of the active site. A non-standard amino acid (selenocysteine) is located at residue Sec-25. ATP-binding positions include Lys-28, 46 to 48 (GYD), Asp-66, Asp-89, and 141 to 143 (GQT). Mg(2+) is bound at residue Asp-48. Asp-89 provides a ligand contact to Mg(2+). A Mg(2+)-binding site is contributed by Asp-244.

The protein belongs to the selenophosphate synthase 1 family. Class II subfamily. Homodimer. Requires Mg(2+) as cofactor.

It catalyses the reaction hydrogenselenide + ATP + H2O = selenophosphate + AMP + phosphate + 2 H(+). Its function is as follows. Synthesizes selenophosphate from selenide and ATP. This is Selenide, water dikinase (selD) from Dictyostelium discoideum (Social amoeba).